We begin with the raw amino-acid sequence, 215 residues long: Protein N-lysine methyltransferase METTL21A (215 aa).

Residues Trp-47, 73–75, Asp-94, Trp-125, and Ala-141 contribute to the S-adenosyl-L-methionine site; that span reads GAG.

This sequence belongs to the methyltransferase superfamily. METTL21 family.

Its subcellular location is the cytoplasm. It carries out the reaction L-lysyl-[protein] + 3 S-adenosyl-L-methionine = N(6),N(6),N(6)-trimethyl-L-lysyl-[protein] + 3 S-adenosyl-L-homocysteine + 3 H(+). Protein-lysine methyltransferase that selectively trimethylates residues in heat shock protein 70 (HSP70) family members. In Xenopus tropicalis (Western clawed frog), this protein is Protein N-lysine methyltransferase METTL21A (mettl21a).